The sequence spans 487 residues: NADH-quinone oxidoreductase subunit N (487 aa).

13 helical membrane-spanning segments follow: residues 7-27, 37-57, 81-101, 112-132, 166-186, 207-227, 237-257, 276-296, 307-327, 329-349, 373-393, 407-427, and 452-472; these read LTLI…ILIT, LVSI…APAL, FAKI…PAFF, PVLV…GDLI, FVLG…VYGF, ALFG…AVPF, GAPT…AVAL, IVIF…IGQT, INNV…GLSA, LTYL…LLML, LAWC…LLGF, DMVL…FYYI, and VLLI…TGWL.

It belongs to the complex I subunit 2 family. As to quaternary structure, NDH-1 is composed of 14 different subunits. Subunits NuoA, H, J, K, L, M, N constitute the membrane sector of the complex.

Its subcellular location is the cell inner membrane. The enzyme catalyses a quinone + NADH + 5 H(+)(in) = a quinol + NAD(+) + 4 H(+)(out). Functionally, NDH-1 shuttles electrons from NADH, via FMN and iron-sulfur (Fe-S) centers, to quinones in the respiratory chain. The immediate electron acceptor for the enzyme in this species is believed to be ubiquinone. Couples the redox reaction to proton translocation (for every two electrons transferred, four hydrogen ions are translocated across the cytoplasmic membrane), and thus conserves the redox energy in a proton gradient. This Erythrobacter litoralis (strain HTCC2594) protein is NADH-quinone oxidoreductase subunit N.